The sequence spans 482 residues: Probable polyamine transporter At1g31820 (482 aa).

A run of 11 helical transmembrane segments spans residues 36 to 56, 66 to 86, 94 to 114, 143 to 163, 171 to 191, 254 to 274, 294 to 314, 344 to 364, 367 to 387, 406 to 426, and 429 to 449; these read VSML…PFGA, LLAL…EALI, FPIN…FWGF, VPAL…TLLL, LTIV…PFAV, VIFV…AIPL, GWLQ…MFLA, TPLL…GLSF, IIAA…IAFV, TVGS…VIVL, and IKVA…KPCL.

This sequence belongs to the amino acid-polyamine-organocation (APC) superfamily. Polyamine:cation symporter (PHS) (TC 2.A.3.12) family.

It localises to the cell membrane. In terms of biological role, probable cell membrane polyamine/proton symporter involved in the polyamine uptake in cells. The chain is Probable polyamine transporter At1g31820 from Arabidopsis thaliana (Mouse-ear cress).